The sequence spans 393 residues: S-adenosylmethionine synthase 2 (393 aa).

Glu-9 is a binding site for Mg(2+). ATP is bound at residue His-15. Glu-43 lines the K(+) pocket. L-methionine is bound by residues Glu-56 and Gln-99. ATP-binding positions include Asp-167–Lys-169, Ser-235–Phe-238, Asp-246, Arg-252–Lys-253, Ala-269, Lys-273, and Lys-277. Asp-246 provides a ligand contact to L-methionine. An L-methionine-binding site is contributed by Lys-277.

Belongs to the AdoMet synthase family. In terms of assembly, homotetramer. The cofactor is Mn(2+). Mg(2+) is required as a cofactor. Requires Co(2+) as cofactor. K(+) serves as cofactor.

It localises to the cytoplasm. It carries out the reaction L-methionine + ATP + H2O = S-adenosyl-L-methionine + phosphate + diphosphate. It participates in amino-acid biosynthesis; S-adenosyl-L-methionine biosynthesis; S-adenosyl-L-methionine from L-methionine: step 1/1. In terms of biological role, catalyzes the formation of S-adenosylmethionine from methionine and ATP. The reaction comprises two steps that are both catalyzed by the same enzyme: formation of S-adenosylmethionine (AdoMet) and triphosphate, and subsequent hydrolysis of the triphosphate. May be involved in the synthesis of betain in response to abiotic stress such as high salinity. The polypeptide is S-adenosylmethionine synthase 2 (SAMS2) (Beta vulgaris (Sugar beet)).